Consider the following 457-residue polypeptide: Gamma-aminobutyric acid receptor subunit gamma-4 (457 aa).

The N-terminal stretch at 1–21 is a signal peptide; it reads MPAMVLLLCLALGPALRSARC. The Extracellular portion of the chain corresponds to 22–256; the sequence is ESTEEYDYDY…VSFDLSRRMG (235 aa). N-linked (GlcNAc...) asparagine glycans are attached at residues Asn-35 and Asn-112. A disulfide bond links Cys-173 and Cys-187. N-linked (GlcNAc...) asparagine glycosylation occurs at Asn-230. 3 consecutive transmembrane segments (helical) span residues 257-279, 283-305, and 317-339; these read YFAI…SFWI, STPA…STIS, and AMDL…YATL. The Cytoplasmic segment spans residues 340-433; that stretch reads NYLVGNKKPL…VRIHISRLDS (94 aa). The chain crosses the membrane as a helical span at residues 434–457; that stretch reads YSRVFFPTAFLLFNIVYWIAYLYL.

The protein belongs to the ligand-gated ion channel (TC 1.A.9) family. Gamma-aminobutyric acid receptor (TC 1.A.9.5) subfamily. GABRG4 sub-subfamily. As to quaternary structure, generally pentameric. There are five types of GABA(A) receptor chains: alpha, beta, gamma, delta, and rho. Abundant in several brain regions, including the ectostriatum, nucleus rotundus and hyperstriatum ventrale.

It localises to the postsynaptic cell membrane. The protein localises to the cell membrane. Its function is as follows. GABA, the major inhibitory neurotransmitter in the vertebrate brain, mediates neuronal inhibition by binding to the GABA/benzodiazepine receptor and opening an integral chloride channel. The protein is Gamma-aminobutyric acid receptor subunit gamma-4 (GABRG4) of Gallus gallus (Chicken).